The following is a 958-amino-acid chain: Glycine dehydrogenase (decarboxylating) (958 aa).

Residue K705 is modified to N6-(pyridoxal phosphate)lysine.

This sequence belongs to the GcvP family. The glycine cleavage system is composed of four proteins: P, T, L and H. Pyridoxal 5'-phosphate is required as a cofactor.

It catalyses the reaction N(6)-[(R)-lipoyl]-L-lysyl-[glycine-cleavage complex H protein] + glycine + H(+) = N(6)-[(R)-S(8)-aminomethyldihydrolipoyl]-L-lysyl-[glycine-cleavage complex H protein] + CO2. In terms of biological role, the glycine cleavage system catalyzes the degradation of glycine. The P protein binds the alpha-amino group of glycine through its pyridoxal phosphate cofactor; CO(2) is released and the remaining methylamine moiety is then transferred to the lipoamide cofactor of the H protein. This is Glycine dehydrogenase (decarboxylating) from Synechococcus sp. (strain CC9902).